The chain runs to 884 residues: Alanine--tRNA ligase (884 aa).

Residues His-562, His-566, Cys-674, and His-678 each coordinate Zn(2+).

This sequence belongs to the class-II aminoacyl-tRNA synthetase family. Zn(2+) serves as cofactor.

It is found in the cytoplasm. It catalyses the reaction tRNA(Ala) + L-alanine + ATP = L-alanyl-tRNA(Ala) + AMP + diphosphate. Its function is as follows. Catalyzes the attachment of alanine to tRNA(Ala) in a two-step reaction: alanine is first activated by ATP to form Ala-AMP and then transferred to the acceptor end of tRNA(Ala). Also edits incorrectly charged Ser-tRNA(Ala) and Gly-tRNA(Ala) via its editing domain. In Rhizobium johnstonii (strain DSM 114642 / LMG 32736 / 3841) (Rhizobium leguminosarum bv. viciae), this protein is Alanine--tRNA ligase.